Here is an 861-residue protein sequence, read N- to C-terminus: Bifunctional uridylyltransferase/uridylyl-removing enzyme (861 aa).

A uridylyltransferase region spans residues Met-1–Arg-321. Residues Leu-322–Thr-678 form a uridylyl-removing region. Residues Val-440–Leu-562 enclose the HD domain. 2 ACT domains span residues Glu-679 to Arg-760 and Gln-788 to Tyr-861.

This sequence belongs to the GlnD family. Mg(2+) is required as a cofactor.

It carries out the reaction [protein-PII]-L-tyrosine + UTP = [protein-PII]-uridylyl-L-tyrosine + diphosphate. The enzyme catalyses [protein-PII]-uridylyl-L-tyrosine + H2O = [protein-PII]-L-tyrosine + UMP + H(+). Uridylyltransferase (UTase) activity is inhibited by glutamine, while glutamine activates uridylyl-removing (UR) activity. Its function is as follows. Modifies, by uridylylation and deuridylylation, the PII regulatory proteins (GlnB and homologs), in response to the nitrogen status of the cell that GlnD senses through the glutamine level. Under low glutamine levels, catalyzes the conversion of the PII proteins and UTP to PII-UMP and PPi, while under higher glutamine levels, GlnD hydrolyzes PII-UMP to PII and UMP (deuridylylation). Thus, controls uridylylation state and activity of the PII proteins, and plays an important role in the regulation of nitrogen assimilation and metabolism. This is Bifunctional uridylyltransferase/uridylyl-removing enzyme from Legionella pneumophila (strain Lens).